Consider the following 434-residue polypeptide: Probable carboxypeptidase BDBG_01803 (434 aa).

Positions 1–20 are cleaved as a signal peptide; sequence MKLSHLAAALSAQLVAPVAA. N-linked (GlcNAc...) asparagine glycosylation is found at N35, N136, and N150. D160 provides a ligand contact to Zn(2+). E192 (proton acceptor) is an active-site residue. Position 193 (E193) interacts with Zn(2+). A glycan (N-linked (GlcNAc...) asparagine) is linked at N343.

This sequence belongs to the peptidase M20A family. It depends on Zn(2+) as a cofactor.

It is found in the secreted. The protein is Probable carboxypeptidase BDBG_01803 of Blastomyces gilchristii (strain SLH14081) (Blastomyces dermatitidis).